Consider the following 245-residue polypeptide: Ribosomal RNA large subunit methyltransferase E (245 aa).

S-adenosyl-L-methionine-binding residues include G58, W60, D78, D96, and D123. K163 functions as the Proton acceptor in the catalytic mechanism.

The protein belongs to the class I-like SAM-binding methyltransferase superfamily. RNA methyltransferase RlmE family.

The protein resides in the cytoplasm. The enzyme catalyses uridine(2552) in 23S rRNA + S-adenosyl-L-methionine = 2'-O-methyluridine(2552) in 23S rRNA + S-adenosyl-L-homocysteine + H(+). In terms of biological role, specifically methylates the uridine in position 2552 of 23S rRNA at the 2'-O position of the ribose in the fully assembled 50S ribosomal subunit. In Methanocaldococcus jannaschii (strain ATCC 43067 / DSM 2661 / JAL-1 / JCM 10045 / NBRC 100440) (Methanococcus jannaschii), this protein is Ribosomal RNA large subunit methyltransferase E.